The chain runs to 951 residues: WD repeat-containing and planar cell polarity effector protein fritz (951 aa).

2 WD repeats span residues 304 to 343 and 345 to 384; these read PMGAQICSFAFSPDQEKLFLGSVDRNICLHDLVQQSTKYA and QIEIVPNQCAWHCDSAMLCVANERSVLQCFDLALATIGHQ. Composition is skewed to polar residues over residues 709–720, 757–771, and 818–828; these read TLKSNSSLQQAP, IPDQSAQLGQFSTMP, and SILSNPANPAP. 3 disordered regions span residues 709-776, 816-883, and 903-951; these read TLKS…SPPP, TASI…AARH, and EYLK…FGVV. The span at 930–942 shows a compositional bias: low complexity; it reads SSKGGNSSSSSSS.

The protein belongs to the WD repeat fritz family.

It localises to the cell membrane. It is found in the cytoplasm. The protein localises to the cytoskeleton. The protein resides in the cilium axoneme. In terms of biological role, probable effector of the planar cell polarity signaling pathway which regulates the septin cytoskeleton in both ciliogenesis and collective cell movements. Functions cell autonomously to regulate wing cell hair polarity and number. This Drosophila melanogaster (Fruit fly) protein is WD repeat-containing and planar cell polarity effector protein fritz (frtz).